The following is a 197-amino-acid chain: uncharacterized protein (197 aa).

This is an uncharacterized protein from Caenorhabditis elegans.